Here is a 263-residue protein sequence, read N- to C-terminus: MPHSKNQRKHRHHSHSERRRQPKRLTLTAKQQQMFDELLRTLNLTFANKKLLVQAFTHSSYVNEHRIQSCKDNERLEFLGDAVLELAVSQYLYKAFEQMSEGDMTKLRASIVCEPSLAQLAEELHFGELVLLGKGEEMTGGRKRPALLADVFESFVGALYLDQGMDAVYLFLERTIYPKISEGAFSHMMDFKSQLQEFIQRDNLGHIHYEIVQERGPAHNREFVSEVVLNNETLGVGTGRSKKEAEQHAAQQALITLSQKKEQ.

The interval 1 to 23 (MPHSKNQRKHRHHSHSERRRQPK) is disordered. Positions 35–164 (FDELLRTLNL…FVGALYLDQG (130 aa)) constitute an RNase III domain. E77 lines the Mg(2+) pocket. The active site involves D81. Mg(2+)-binding residues include D150 and E153. Residue E153 is part of the active site. Residues 190 to 259 (DFKSQLQEFI…AQQALITLSQ (70 aa)) form the DRBM domain.

It belongs to the ribonuclease III family. As to quaternary structure, homodimer. It depends on Mg(2+) as a cofactor.

It is found in the cytoplasm. It catalyses the reaction Endonucleolytic cleavage to 5'-phosphomonoester.. Digests double-stranded RNA. Involved in the processing of primary rRNA transcript to yield the immediate precursors to the large and small rRNAs (23S and 16S). Processes some mRNAs, and tRNAs when they are encoded in the rRNA operon. Processes pre-crRNA and tracrRNA of type II CRISPR loci if present in the organism. The sequence is that of Ribonuclease 3 from Halalkalibacterium halodurans (strain ATCC BAA-125 / DSM 18197 / FERM 7344 / JCM 9153 / C-125) (Bacillus halodurans).